We begin with the raw amino-acid sequence, 725 residues long: Dipeptidyl-peptidase 5 (725 aa).

An N-terminal signal peptide occupies residues 1–18 (MGALRWLSIAATASTALA). 6 N-linked (GlcNAc...) asparagine glycosylation sites follow: asparagine 75, asparagine 96, asparagine 153, asparagine 258, asparagine 383, and asparagine 453. Serine 563 functions as the Charge relay system in the catalytic mechanism. N-linked (GlcNAc...) asparagine glycosylation occurs at asparagine 610. Catalysis depends on charge relay system residues aspartate 646 and histidine 678.

The protein belongs to the peptidase S9C family.

Its subcellular location is the secreted. The polypeptide is Dipeptidyl-peptidase 5 (Aspergillus oryzae (strain ATCC 42149 / RIB 40) (Yellow koji mold)).